Reading from the N-terminus, the 143-residue chain is MKRLVGVLMILGLMLTSWGLLGSPQTAIAASLSPLSFNPSPVLAEQQFRNAMDDKLATDFGKKIDLNNTNVRAFMQYPGMYPTLARMILKNAPFESVEDVLKMPGLTDTQKEILKNNFSNFVVSPPLDALVEGGDRFNNGIYR.

The N-terminal stretch at M1–A29 is a signal peptide. The propeptide occupies A30–A44.

Belongs to the PsbU family. In terms of assembly, PSII is composed of 1 copy each of membrane proteins PsbA, PsbB, PsbC, PsbD, PsbE, PsbF, PsbH, PsbI, PsbJ, PsbK, PsbL, PsbM, PsbT, PsbX, PsbY, PsbZ, Psb30/Ycf12, peripheral proteins PsbO, CyanoQ (PsbQ), PsbU, PsbV and a large number of cofactors. It forms dimeric complexes.

It localises to the cellular thylakoid membrane. One of the extrinsic, lumenal subunits of photosystem II (PSII). PSII is a light-driven water plastoquinone oxidoreductase, using light energy to abstract electrons from H(2)O, generating a proton gradient subsequently used for ATP formation. The extrinsic proteins stabilize the structure of photosystem II oxygen-evolving complex (OEC), the ion environment of oxygen evolution and protect the OEC against heat-induced inactivation. The protein is Photosystem II extrinsic protein U of Leptolyngbya laminosa (Phormidium laminosum).